A 232-amino-acid polypeptide reads, in one-letter code: Putative caffeoyl-CoA O-methyltransferase At1g67980 (232 aa).

Position 8 (lysine 8) interacts with substrate. S-adenosyl-L-methionine contacts are provided by residues valine 52, glutamate 74, glycine 76–valine 77, serine 82, and aspartate 100. Aspartate 149 serves as a coordination point for substrate. Aspartate 149 is a binding site for a divalent metal cation. An S-adenosyl-L-methionine-binding site is contributed by aspartate 151. A divalent metal cation-binding residues include aspartate 175 and asparagine 176.

The protein belongs to the class I-like SAM-binding methyltransferase superfamily. Cation-dependent O-methyltransferase family. CCoAMT subfamily. Requires a divalent metal cation as cofactor.

It carries out the reaction (E)-caffeoyl-CoA + S-adenosyl-L-methionine = (E)-feruloyl-CoA + S-adenosyl-L-homocysteine + H(+). Its pathway is aromatic compound metabolism; phenylpropanoid biosynthesis. Methylates caffeoyl-CoA to feruloyl-CoA and 5-hydroxyferuloyl-CoA to sinapoyl-CoA. Plays a role in the synthesis of feruloylated polysaccharides. Involved in the reinforcement of the plant cell wall. Also involved in the responding to wounding or pathogen challenge by the increased formation of cell wall-bound ferulic acid polymers. The protein is Putative caffeoyl-CoA O-methyltransferase At1g67980 of Arabidopsis thaliana (Mouse-ear cress).